Consider the following 536-residue polypeptide: Arylsulfatase (536 aa).

The Ca(2+) site is built by D13, D14, and C51. C51 acts as the Nucleophile in catalysis. C51 is subject to 3-oxoalanine (Cys). The active site involves H115. Residues D317 and N318 each coordinate Ca(2+).

This sequence belongs to the sulfatase family. Monomer. It depends on Ca(2+) as a cofactor. The conversion to 3-oxoalanine (also known as C-formylglycine, FGly), of a serine or cysteine residue in prokaryotes and of a cysteine residue in eukaryotes, is critical for catalytic activity.

The protein localises to the cytoplasm. It carries out the reaction an aryl sulfate + H2O = a phenol + sulfate + H(+). In terms of biological role, hydrolyzes the bond between sulfate and the aromatic ring in a compound such as 4-nitrocatechol sulfate. In Pseudomonas aeruginosa (strain ATCC 15692 / DSM 22644 / CIP 104116 / JCM 14847 / LMG 12228 / 1C / PRS 101 / PAO1), this protein is Arylsulfatase (atsA).